A 975-amino-acid polypeptide reads, in one-letter code: Ubiquitin C-terminal hydrolase 15 (975 aa).

Positions 88, 91, 99, 102, 108, 112, 121, and 125 each coordinate Zn(2+). The MYND-type zinc-finger motif lies at 88-125 (CATCHGPAKTRCSRCKSVRYCSGKCQIIHWRQGHKQTC). Positions 301–378 (EGPYASAAES…STKTAVSTNS (78 aa)) are disordered. Positions 309–322 (ESLQRSNSSGNVTG) are enriched in polar residues. A compositionally biased stretch (basic and acidic residues) spans 354 to 369 (YDGHEKNPHNKNEQRS). The USP domain occupies 441-747 (RGLFNCGNSC…GAYMLFYMRS (307 aa)). Cys450 (nucleophile) is an active-site residue. His706 serves as the catalytic Proton acceptor. The interval 764 to 783 (PTCSKRHSSKSSKGSKQDLN) is disordered.

This sequence belongs to the peptidase C19 family. In terms of tissue distribution, highly expressed in young panicles. Expressed in roots, leaf blades, leaf sheaths and stems. Expressed at low levels in brown grains.

Its subcellular location is the cytoplasm. The protein localises to the nucleus. It carries out the reaction Thiol-dependent hydrolysis of ester, thioester, amide, peptide and isopeptide bonds formed by the C-terminal Gly of ubiquitin (a 76-residue protein attached to proteins as an intracellular targeting signal).. Recognizes and hydrolyzes the peptide bond at the C-terminal Gly of ubiquitin. Involved in the processing of poly-ubiquitin precursors as well as that of ubiquitinated proteins. Involved in the regulation of grain size. Acts as positive regulator of grain width and size by influencing cell proliferation. Functions partially antagonistically with GW2 in the regulation of grain width. Possesses deubiquitinating enzyme activity in vitro. This Oryza sativa subsp. japonica (Rice) protein is Ubiquitin C-terminal hydrolase 15.